The following is a 432-amino-acid chain: Adenylosuccinate synthetase (432 aa).

Residues 12–18 (GDEGKGK) and 40–42 (GHT) contribute to the GTP site. Asp13 (proton acceptor) is an active-site residue. 2 residues coordinate Mg(2+): Asp13 and Gly40. IMP-binding positions include 13 to 16 (DEGK), 38 to 41 (NAGH), Thr130, Arg144, Gln226, Thr241, and Arg305. His41 (proton donor) is an active-site residue. 301–307 (STTGRSR) provides a ligand contact to substrate. GTP-binding positions include Arg307, 333–335 (KLD), and 415–417 (SVG).

It belongs to the adenylosuccinate synthetase family. As to quaternary structure, homodimer. Mg(2+) serves as cofactor.

Its subcellular location is the cytoplasm. It carries out the reaction IMP + L-aspartate + GTP = N(6)-(1,2-dicarboxyethyl)-AMP + GDP + phosphate + 2 H(+). Its pathway is purine metabolism; AMP biosynthesis via de novo pathway; AMP from IMP: step 1/2. Functionally, plays an important role in the de novo pathway of purine nucleotide biosynthesis. Catalyzes the first committed step in the biosynthesis of AMP from IMP. The polypeptide is Adenylosuccinate synthetase (Bdellovibrio bacteriovorus (strain ATCC 15356 / DSM 50701 / NCIMB 9529 / HD100)).